Here is a 169-residue protein sequence, read N- to C-terminus: uncharacterized protein (169 aa).

This is an uncharacterized protein from Autographa californica nuclear polyhedrosis virus (AcMNPV).